The sequence spans 242 residues: Placenta-expressed transcript 1 protein (242 aa).

Positions 1–26 are cleaved as a signal peptide; that stretch reads MAILRSLLLPLGLLLCLWLLCSPASC. Residues 27–220 are Extracellular-facing; that stretch reads TNSTTNCKPF…TTHKSSANRA (194 aa). N-linked (GlcNAc...) asparagine glycosylation is found at Asn-28, Asn-81, and Asn-106. The segment at 162–209 is disordered; it reads VITTPTHKPTPAPPKPTTNPQKTTTNHSIPTTSLPKPTTSLYTSHPKL. Over residues 169–178 the composition is skewed to pro residues; it reads KPTPAPPKPT. The span at 179–205 shows a compositional bias: low complexity; sequence TNPQKTTTNHSIPTTSLPKPTTSLYTS. Residues 221–241 traverse the membrane as a helical segment; it reads FLCPVREAIQILFIFLIGTLL. Position 242 (Phe-242) is a topological domain, cytoplasmic.

N-glycosylated.

The protein resides in the membrane. It is found in the apical cell membrane. Modulates leading keratinocyte migration and cellular adhesion to matrix proteins during a wound-healing response and promotes wound repair. May play a role during trichilemmal differentiation of the hair follicle. The protein is Placenta-expressed transcript 1 protein (PLET1) of Bos taurus (Bovine).